The sequence spans 276 residues: Small ribosomal subunit protein uS3 (276 aa).

The 72-residue stretch at 39 to 110 folds into the KH type-2 domain; that stretch reads IRRETMKFLK…KINIKIKEIK (72 aa).

It belongs to the universal ribosomal protein uS3 family. As to quaternary structure, part of the 30S ribosomal subunit. Forms a tight complex with proteins S10 and S14.

In terms of biological role, binds the lower part of the 30S subunit head. Binds mRNA in the 70S ribosome, positioning it for translation. The protein is Small ribosomal subunit protein uS3 of Borrelia turicatae (strain 91E135).